Reading from the N-terminus, the 469-residue chain is Adenosylhomocysteinase (469 aa).

Residues T58, D133, and E195 each contribute to the substrate site. Residue 196–198 (TTT) coordinates NAD(+). Residues K225 and D229 each coordinate substrate. NAD(+) is bound by residues N230, 259-264 (GFGDVG), E282, N317, 338-340 (IGH), and N383.

Belongs to the adenosylhomocysteinase family. The cofactor is NAD(+).

It is found in the cytoplasm. It catalyses the reaction S-adenosyl-L-homocysteine + H2O = L-homocysteine + adenosine. Its pathway is amino-acid biosynthesis; L-homocysteine biosynthesis; L-homocysteine from S-adenosyl-L-homocysteine: step 1/1. Its function is as follows. May play a key role in the regulation of the intracellular concentration of adenosylhomocysteine. The protein is Adenosylhomocysteinase of Rhodopseudomonas palustris (strain ATCC BAA-98 / CGA009).